Here is a 400-residue protein sequence, read N- to C-terminus: Outer membrane protein alpha (400 aa).

Residues 1-20 form the signal peptide; that stretch reads MKRVLLTVAMLSVFFSAMFA. The region spanning 21–81 is the SLH domain; the sequence is FFPDVPKDHW…DFIEQKMLAG (61 aa). A coiled-coil region spans residues 85–379; the sequence is DLAQVVGNLS…ESVKAYNRNL (295 aa). Tandem repeats lie at residues 208–232, 251–275, and 326–350. The interval 208 to 350 is 3 X 25 AA approximate repeat; the sequence is VNLHEKDIIN…SSLEEDLNMK (143 aa). A helical membrane pass occupies residues 380–400; it reads SILTGAFFGILGLILIAISGK.

Homotetramer.

The protein resides in the cell outer membrane. Its function is as follows. Links the outer membrane to the inner membrane. Long fibrous protein that could serve to separate the two membranes. This chain is Outer membrane protein alpha (omp-alpha), found in Thermotoga maritima (strain ATCC 43589 / DSM 3109 / JCM 10099 / NBRC 100826 / MSB8).